The following is a 319-amino-acid chain: L-lactate dehydrogenase (319 aa).

NAD(+) contacts are provided by residues 10-11 (RV), aspartate 32, arginine 37, tyrosine 62, and 76-77 (GV). Residues glutamine 79, arginine 85, and 117–120 (NPVD) each bind substrate. NAD(+) is bound by residues 115–117 (VTN) and serine 140. 145-148 (DTAR) contacts substrate. The beta-D-fructose 1,6-bisphosphate site is built by arginine 150 and histidine 165. Residue histidine 172 is the Proton acceptor of the active site. Tyrosine 217 carries the phosphotyrosine modification. Threonine 226 is a substrate binding site.

It belongs to the LDH/MDH superfamily. LDH family. In terms of assembly, homotetramer.

The protein resides in the cytoplasm. It carries out the reaction (S)-lactate + NAD(+) = pyruvate + NADH + H(+). Its pathway is fermentation; pyruvate fermentation to lactate; (S)-lactate from pyruvate: step 1/1. With respect to regulation, allosterically activated by fructose 1,6-bisphosphate (FBP). Inactivated by Mn(2+), Co(2+), Cd(2+) and Zn(2+). Its function is as follows. Catalyzes the conversion of lactate to pyruvate. It is stereospecific for L(+)-lactate. The chain is L-lactate dehydrogenase from Thermotoga maritima (strain ATCC 43589 / DSM 3109 / JCM 10099 / NBRC 100826 / MSB8).